A 91-amino-acid polypeptide reads, in one-letter code: MSFDRSKTPTWRPGYRFQYEPAQKGHVLLYPEGMIKLNESAALIGGLIDGERDVAAIIAELDKQFPGVPELGDDIEQFMEVARAQHWITLD.

Belongs to the PqqD family. Monomer. Interacts with PqqE.

Its pathway is cofactor biosynthesis; pyrroloquinoline quinone biosynthesis. Functions as a PqqA binding protein and presents PqqA to PqqE, in the pyrroloquinoline quinone (PQQ) biosynthetic pathway. This Pseudomonas fluorescens (strain Pf0-1) protein is PqqA binding protein.